A 450-amino-acid chain; its full sequence is Signal recognition particle 54 kDa protein (450 aa).

GTP is bound by residues 107–114 (GIQGSGKT), 188–192 (DTAGR), and 247–250 (TKLD).

It belongs to the GTP-binding SRP family. SRP54 subfamily. As to quaternary structure, part of the signal recognition particle protein translocation system, which is composed of SRP and FtsY. Archaeal SRP consists of a 7S RNA molecule of 300 nucleotides and two protein subunits: SRP54 and SRP19.

It is found in the cytoplasm. It catalyses the reaction GTP + H2O = GDP + phosphate + H(+). In terms of biological role, involved in targeting and insertion of nascent membrane proteins into the cytoplasmic membrane. Binds to the hydrophobic signal sequence of the ribosome-nascent chain (RNC) as it emerges from the ribosomes. The SRP-RNC complex is then targeted to the cytoplasmic membrane where it interacts with the SRP receptor FtsY. This Methanococcus maripaludis (strain DSM 14266 / JCM 13030 / NBRC 101832 / S2 / LL) protein is Signal recognition particle 54 kDa protein.